A 101-amino-acid polypeptide reads, in one-letter code: Small ribosomal subunit protein uS14 (101 aa).

Belongs to the universal ribosomal protein uS14 family. Part of the 30S ribosomal subunit. Contacts proteins S3 and S10.

Its function is as follows. Binds 16S rRNA, required for the assembly of 30S particles and may also be responsible for determining the conformation of the 16S rRNA at the A site. The protein is Small ribosomal subunit protein uS14 of Shewanella halifaxensis (strain HAW-EB4).